Reading from the N-terminus, the 204-residue chain is CASP-like protein 4B4 (204 aa).

Residues 1–60 (MSAAVAASSGAPAADVEKGAAAADANVDGGGAPAAAAASGEGVVSAVVRRWRRQDLLEKS) are Cytoplasmic-facing. The helical transmembrane segment at 61-81 (GSALRVAAWAFSLLAFVVMGA) threads the bilayer. The Extracellular segment spans residues 82 to 98 (NDHGDWRQFEHYEEYRY). Residues 99–119 (VVAIGVLAFIYTTLQLVRHGV) form a helical membrane-spanning segment. Over 120–130 (RLTGGQDLQGK) the chain is Cytoplasmic. A helical transmembrane segment spans residues 131–151 (VAVLVDFAGDQVTAYLLMSAV). Over 152 to 175 (SAAIPITNRMREGADNVFTDSSAA) the chain is Extracellular. A helical transmembrane segment spans residues 176–196 (SISMAFFAFLCLALSALVSGF). At 197–204 (KLAKQTYI) the chain is on the cytoplasmic side.

It belongs to the Casparian strip membrane proteins (CASP) family. In terms of assembly, homodimer and heterodimers.

The protein localises to the cell membrane. The sequence is that of CASP-like protein 4B4 from Oryza sativa subsp. japonica (Rice).